We begin with the raw amino-acid sequence, 841 residues long: MAP7 domain-containing protein 1 (841 aa).

Disordered regions lie at residues 1 to 151 and 184 to 208; these read MESG…ERAK and EQRL…EKNK. Residues 22 to 52 show a composition bias toward pro residues; sequence PPEPRPSPEGDPSPPPPPMSALVPDTPPDTP. A phosphothreonine mark is found at Thr-47 and Thr-51. Phosphoserine occurs at positions 70, 86, and 93. At Thr-97 the chain carries Phosphothreonine. Residues Ser-113 and Ser-116 each carry the phosphoserine modification. Thr-118 is modified (phosphothreonine). Residues Ser-123 and Ser-125 each carry the phosphoserine modification. Positions 128-222 form a coiled coil; the sequence is TKQEVKKAGE…AAIQRSVKKT (95 aa). Residues 130–151 are compositionally biased toward basic and acidic residues; sequence QEVKKAGERHKLAKERREERAK. Residues Ser-254, Ser-273, Ser-313, Ser-366, and Ser-399 each carry the phosphoserine modification. A disordered region spans residues 316–813; that stretch reads TLPRNGRDQG…PSGDKSLSRT (498 aa). Positions 365–377 are enriched in polar residues; the sequence is ASASPLTPCSVTR. The span at 405-435 shows a compositional bias: basic and acidic residues; the sequence is RRPEASPVQKKEKKDKERENEKEKSALARER. Residues 412-441 adopt a coiled-coil conformation; it reads VQKKEKKDKERENEKEKSALARERSLKKRQ. A phosphoserine mark is found at Ser-442, Ser-446, Ser-452, Ser-454, and Ser-460. Positions 460 to 473 are enriched in low complexity; sequence SPKSKARPSSPSTS. Lys-462 participates in a covalent cross-link: Glycyl lysine isopeptide (Lys-Gly) (interchain with G-Cter in SUMO2). Phosphoserine occurs at positions 479 and 496. The segment covering 479–497 has biased composition (pro residues); that stretch reads SPCPSPGPGHTLPPKPPSP. Basic and acidic residues predominate over residues 523–539; that stretch reads PEDKSQSKRRASNEKES. Ser-544, Ser-548, and Ser-552 each carry phosphoserine. Positions 544–561 are enriched in pro residues; it reads SPAPSPAPSPTPAPPQKE. Thr-554 bears the Phosphothreonine mark. A compositionally biased stretch (low complexity) spans 562-576; the sequence is QPPAETPTDAAVLTS. Pro residues predominate over residues 577–586; that stretch reads PPAPAPPVTP. The stretch at 593 to 721 forms a coiled coil; the sequence is TTDREEATRL…LEEIMKRTRK (129 aa). A compositionally biased stretch (basic and acidic residues) spans 594-735; that stretch reads TDREEATRLL…ETKQKQDSKE (142 aa). 2 positions are modified to phosphoserine: Ser-742 and Ser-753. A phosphothreonine mark is found at Thr-813 and Thr-816. A Phosphoserine modification is found at Ser-834.

It belongs to the MAP7 family.

It is found in the cytoplasm. Its subcellular location is the cytoskeleton. It localises to the spindle. The protein localises to the microtubule organizing center. The protein resides in the centrosome. It is found in the midbody. Its function is as follows. Microtubule-stabilizing protein involved in the control of cell motility and neurite outgrowth. Facilitate microtubule stabilization through the maintenance of acetylated stable microtubules. This chain is MAP7 domain-containing protein 1 (MAP7D1), found in Homo sapiens (Human).